The primary structure comprises 133 residues: Aspartate 1-decarboxylase (133 aa).

S26 functions as the Schiff-base intermediate with substrate; via pyruvic acid in the catalytic mechanism. The residue at position 26 (S26) is a Pyruvic acid (Ser). Residue T58 participates in substrate binding. Residue Y59 is the Proton donor of the active site. Position 74 to 76 (74 to 76) interacts with substrate; it reads GAA.

This sequence belongs to the PanD family. In terms of assembly, heterooctamer of four alpha and four beta subunits. It depends on pyruvate as a cofactor. Is synthesized initially as an inactive proenzyme, which is activated by self-cleavage at a specific serine bond to produce a beta-subunit with a hydroxyl group at its C-terminus and an alpha-subunit with a pyruvoyl group at its N-terminus.

The protein resides in the cytoplasm. The catalysed reaction is L-aspartate + H(+) = beta-alanine + CO2. Its pathway is cofactor biosynthesis; (R)-pantothenate biosynthesis; beta-alanine from L-aspartate: step 1/1. In terms of biological role, catalyzes the pyruvoyl-dependent decarboxylation of aspartate to produce beta-alanine. In Legionella pneumophila subsp. pneumophila (strain Philadelphia 1 / ATCC 33152 / DSM 7513), this protein is Aspartate 1-decarboxylase.